The sequence spans 3500 residues: MSVFDRLAGFADSVTNAKQVDVSTATAQKKAEQGVTTPLVSPDAAYQMQAARTGNVGANAFEPGTVQSDFMNLTPMQIMNKYGVEQGLQLINARADAGNQVFNDSVTTRTPGEELGDIATGVGLGFVNTLGGIGALGAGLLNDDAGAVVAQQLSKFNDAVHATQSQALQDKRKLFAARNLMNEVESERQYQTDKKEGTNDIVASLSKFGRDFVGSIENAAQTDSIISDGLAEGVGSLLGAGPVLRGASLLGKAVVPANTLRSAALAGAIDAGTGTQSLARIASTVGRAAPGMVGVGAMEAGGAYQQTADEIMKMSLKDLEKSPVYQQHIKDGMSPEQARRQTASETGLTAAAIQLPIAAATGPLVSRFEMAPFRAGSLGAVGMNLARETVEEGVQGATGQLAQNIAQQQNIDKNQDLLKGVGTQAGLGALYGFGSAGVVQAPAGAARLAGAATAPVLRTTMAGVKAAGSVAGKVVSPIKNTLVARGERVMKQNEEASPVADDYVAQAAQEAMAQAPEAEVTIRDAVEATDATPEQKVAAHQYVSDLMNATRFNPENYQEAPEHIRNAVAGSTDQVQVIQKLADLVNTLDESNPQALMEAASYMYDAVSEFEQFINRDPAALDSIPKDSPAIELLNRYTNLTANIQNTPKVIGALNVINRMINESAQNGSLNVTEESSPQEMQNVALAAEVAPEKLNPESVNVVLKHAADGRIKLNNRQIAALQNAAAILKGAREYDAEAARLGLRPQDIVSKQIKTDESRTQEGQYSALQHANRIRSAYNSGNFELASAYLNDFMQFAQHMQNKVGALNEHLVTGNADKNKSVHYQALTADREWVRSRTGLGVNPYDTKSVKFAQQVALEAKTVADIANALASAYPELKVSHIKVTPLDSRLNAPAAEVVKAFRQGNRDVASSQPKADSVNQVKETPVTKQEPVTSTVQTKTPVSESVKTEPTTKESSPQAIKEPVNQSEKQDVNLTNEDNIKQPTESVKETETSTKESTVTEELKEGIDAVYPSLVGTADSKAEGIKNYFKLSFTLPEEQKSRTVGSEAPLKDVAQALSSRARYELFTEKETANPAFNGEVIKRYKELMEHGEGIADILRSRLAKFLNTKDVGKRFAQGTEANRWVGGKLLNIVEQDGDTFKYNEQLLQTAVLAGLQWRLTATSNTAIKDAKDVAAITGIDQALLPEGLVEQFDTGMTLTEAVSSLAQKIESYWGLSRNPNAPLGYTKGIPTAMAAEILAAFVESTDVVENIVDMSEIDPDNKKTIGLYTITELDSFDPINSFPTAIEEAVLVNPTEKMFFGDDIPPVANTQLRNPAVRNTPEQKAALKAEQATEFYVHTPMVQFYETLGKDRILELMGAGTLNKELLNDNHAKSLEGKNRSVEDSYNQLFSVIEQVRAQSEDISTVPIHYAYNMTRVGRMQMLGKYNPQSAKLVREAILPTKATLDLSNQNNEDFSAFQLGLAQALDIKVHTMTREVMSDELTKLLEGNLKPAIDMMVEFNTTGSLPENAVDVLNTALGDRKSFVALMALMEYSRYLVAEDKSAFVTPLYVEADGVTNGPINAMMLMTGGLFTPDWIRNIAKGGLFIGSPNKTMNEHRSTADNNDLYQASTNALMESLGKLRSNYASNMPIQSQIDSLLSLMDLFLPDINLGENGALELKRGIAKNPLTITIYGSGARGIAGKLVSSVTDAIYERMSDVLKARAKDPNISAAMAMFGKQAASEAHAEELLARFLKDMETLTSTVPVKRKGVLELQSTGTGAKGKINPKTYTIKGEQLKALQENMLHFFVEPLRNGITQTVGESLVYSTEQLQKATQIQSVVLEDMFKQRVQEKLAEKAKDPTWKKGDFLTQKELNDIQASLNNLAPMIETGSQTFYIAGSENAEVANQVLATNLDDRMRVPMSIYAPAQAGVAGIPFMTIGTGDGMMMQTLSTMKGAPKNTLKIFDGMNIGLNDITDASRKANEAVYTSWQGNPIKNVYESYAKFMKNVDFSKLSPEALEAIGKSALEYDQRENATVDDIANAASLIERNLRNIALGVDIRHKVLDKVNLSIDQMAAVGAPYQNNGKIDLSNMTPEQQADELNKLFREELEARKQKVAKARAEVKEETVSEKEPVNPDFGMVGREHKASGVRILSATAIRNLAKISNLPSTQAATLAEIQKSLAAKDYKIIYGTPTQVAEYARQKNVTELTSQEMEEAQAGNIYGWTNFDDKTIYLVSPSMETLIHELVHASTFEEVYSFYQGNEVSPTSKQAIENLEGLMEQFRSLDISKDSPEMREAYADAIATIEGHLSNGFVDPAISKAAALNEFMAWGLANRALAAKQKRTSSLVQMVKDVYQAIKKLIWGRKQAPALGEDMFSNLLFNSAILMRSQPTTQAVAKDGTLFHSKAYGNNERLSQLNQTFDKLVTDYLRTDPVTEVERRGNVANALMSATRLVRDVQSHGFNMTAQEQSVFQMVTAALATEAAIDPHAMARAQELYTHVMKHLTVEHFMADPDSTNPADRYYAQQKYDTISGANLVEVDAKGRTSLLPTFLGLAMVNEELRSIIKEMPVPKADKKLGNDIDTLLTNAGTQVMESLNRRMAGDQKATNVQDSIDALSETIMAAALKRESFYDAVATPTGNFIDRANQYVTDSIERLSETVIEKADKVIANPSNIAAKGVAHLAKLTAAIASEKQGEIVAQGVMTAMNQGKVWQPFHDLVNDIVGRTKTNANVYDLIKLVKSQISQDRQQFREHLPTVIAGKFSRKLTDTEWSAMHTGLGKTDLAVLRETMSMAEIRDLLSSSKKVKDEISTLEKEIQNQAGRNWNLVQKKSKQLAQYMIMGEVGNNLLRNAHAISRLLGERITNGPVADVAAIDKLITLYSLELMNKSDRDLLSELAQSEVEGMEFSIAYMVGQRTEEMRKAKGDNRTLLNHFKGYIPVENQQGVNLIIADDKEFAKLNSQSFTRIGTYQGSTGFRTGSKGYYFSPVAARAPYSQGILQNVRNTAGGVDIGTGFTLGTMVAGRITDKPTVERITKALAKGERGREPLMPIYNSKGQVVAYEQSVDPNMLKHLNQDNHFAKMVGVWRGRQVEEAKAQRFNDILIEQLHAMYEKDIKDSSANKSQYVNLLGKIDDPVLADAINLMNIETRHKAEELFGKDELWVRRDMLNDALGYRAASIGDVWTGNSRWSPSTLDTVKKMFLGAFGNKAYHVVMNAENTIQNLVKDAKTVIVVKSVVVPAVNFLANIYQMIGRGVPVKDIAVNIPRKTSEINQYIKSRLRQIDAEAELRAAEGNPNLVRKLKTEIQSITDSHRRMSIWPLIEAGEFSSIADAGISRDDLLVAEGKIHEYMEKLANKLPEKVRNAGRYALIAKDTALFQGIQKTVEYSDFIAKAIIYDDLVKRKKKSSSEALGQVTEEFINYDRLPGRFRGYMESMGLMWFYNFKIRSIKVAMSMIRNNPVHSLIATVVPAPTMFGNVGLPIQDNMLTMLAEGRLDYSLGFGQGLRAPTLNPWFNLTH.

Positions 907 to 1003 are disordered; that stretch reads NRDVASSQPK…TSTKESTVTE (97 aa). 2 stretches are compositionally biased toward polar residues: residues 910 to 947 and 955 to 985; these read VASS…VSES and KESS…IKQP. ATP is bound by residues 1434–1437, 1556–1561, and 1667–1668; these read KLVR, DGVTNG, and KN. Residue aspartate 1556 coordinates Mg(2+). Residue aspartate 1948 coordinates Mg(2+). Coiled coils occupy residues 2078 to 2111 and 2777 to 2810; these read EQQA…EETV and AEIR…NWNL.

Belongs to the phage and mitochondrial RNA polymerase family. Requires Mg(2+) as cofactor.

Its subcellular location is the virion. It carries out the reaction RNA(n) + a ribonucleoside 5'-triphosphate = RNA(n+1) + diphosphate. In terms of biological role, DNA-dependent RNA polymerase, which is injected into the host upon infection and transcribes the phage early genes from promoters that have a 5-bp stem-3 nt loop hairpin structure. This chain is Virion DNA-directed RNA polymerase (50), found in Escherichia coli (Bacteriophage N4).